A 636-amino-acid chain; its full sequence is MGKVIGIDLGTSNSAAAVMMGGKPTIIPAAEGQTAAGKAFPSVVAFSKEGELLVGEPARRQAVTNPDNTIIAAKRKMGSDYTFKIQDKEYKPQQISSFILQKIKKDAEAFVGETVEKAVITVPAYFDDNQRQATKDAGTIAGLDVVRIINEPTAASLAFGLDKAKEDMKILVFDFGGGTLDVTIMEMGGGVFEVMSTSGDTQLGGTDMDKVLIDYIVDEFKKKEGVDLSQDTTAMTRIREAAEKAKIELSTVMETDVNLPFIAHDPSSGAKNLELRLTRSKLDELIGPIVDRCKPSIQKALEDAKLSNSDINKIVMIGGPTRIPLVKKFVSEVIGKEVESGVDPMEAVAMGAAIQAGIIAGDVTSDIVLLDVTPLTLGIETLGGVREPLIERNTTIPTSKGKVFTTAADNQTAVTIHVVQGERPMATDNVSLGSFNLTDLPPAPRGVPQIEVKFDIDANGIINVTAKDLGTQKEAKITIETKTKLSEEEIEKLKEDAEKFSEEDKKKKEKIDLKNEAESYIYTTEKLVNHDLKDKISQEQGIKITDAVKEVKEVLDKEPEELKPKLEALQSIVNEVTTELYKNAAPPPGADGQQGADGQQGADGQQGADGQQGADGQQGADGQTTESSSNDETKTN.

The disordered stretch occupies residues Glu579–Asn636. Residues Ala590–Gln623 are compositionally biased toward low complexity.

It belongs to the heat shock protein 70 family.

Its function is as follows. Acts as a chaperone. The chain is Chaperone protein DnaK from Nitrosopumilus maritimus (strain SCM1).